Reading from the N-terminus, the 92-residue chain is Small ribosomal subunit protein uS19c (92 aa).

This sequence belongs to the universal ribosomal protein uS19 family.

It is found in the plastid. The protein resides in the chloroplast. In terms of biological role, protein S19 forms a complex with S13 that binds strongly to the 16S ribosomal RNA. This Nandina domestica (Heavenly bamboo) protein is Small ribosomal subunit protein uS19c.